Consider the following 185-residue polypeptide: MSKEVLTQTKEKMEKAIAAYQRELATVRAGRANPSLLDKVTVEYYGAQTPLNQLSSINVPEARMLVITPYDKTAIGDIEKAILKADLGLTPTSDGNMIRIAIPALTEERRKELVKVVKKYAEEAKVAVRNVRRDANDDLKKLEKNGDITEDELRASTEDVQKLTDEYVSKIDSVTKDKEKEIMEV.

The protein belongs to the RRF family.

It localises to the cytoplasm. In terms of biological role, responsible for the release of ribosomes from messenger RNA at the termination of protein biosynthesis. May increase the efficiency of translation by recycling ribosomes from one round of translation to another. Functionally, plays a role in sporulation. The polypeptide is Ribosome-recycling factor (Bacillus subtilis (strain 168)).